Here is a 423-residue protein sequence, read N- to C-terminus: Gamma-glutamyl phosphate reductase (423 aa).

Belongs to the gamma-glutamyl phosphate reductase family.

The protein resides in the cytoplasm. The enzyme catalyses L-glutamate 5-semialdehyde + phosphate + NADP(+) = L-glutamyl 5-phosphate + NADPH + H(+). It functions in the pathway amino-acid biosynthesis; L-proline biosynthesis; L-glutamate 5-semialdehyde from L-glutamate: step 2/2. Functionally, catalyzes the NADPH-dependent reduction of L-glutamate 5-phosphate into L-glutamate 5-semialdehyde and phosphate. The product spontaneously undergoes cyclization to form 1-pyrroline-5-carboxylate. This Burkholderia thailandensis (strain ATCC 700388 / DSM 13276 / CCUG 48851 / CIP 106301 / E264) protein is Gamma-glutamyl phosphate reductase.